The chain runs to 207 residues: Cytochrome c biogenesis ATP-binding export protein CcmA (207 aa).

Positions 4–207 constitute an ABC transporter domain; that stretch reads LEARELLCER…RISLTQTRAA (204 aa). ATP is bound at residue 36-43; sequence GSNGAGKT.

This sequence belongs to the ABC transporter superfamily. CcmA exporter (TC 3.A.1.107) family. The complex is composed of two ATP-binding proteins (CcmA) and two transmembrane proteins (CcmB).

The protein resides in the cell inner membrane. The catalysed reaction is heme b(in) + ATP + H2O = heme b(out) + ADP + phosphate + H(+). In terms of biological role, part of the ABC transporter complex CcmAB involved in the biogenesis of c-type cytochromes; once thought to export heme, this seems not to be the case, but its exact role is uncertain. Responsible for energy coupling to the transport system. This chain is Cytochrome c biogenesis ATP-binding export protein CcmA, found in Shigella flexneri.